The primary structure comprises 436 residues: Proline--tRNA ligase (436 aa).

The protein belongs to the class-II aminoacyl-tRNA synthetase family. ProS type 2 subfamily. In terms of assembly, homodimer.

It is found in the cytoplasm. The catalysed reaction is tRNA(Pro) + L-proline + ATP = L-prolyl-tRNA(Pro) + AMP + diphosphate. In terms of biological role, catalyzes the attachment of proline to tRNA(Pro) in a two-step reaction: proline is first activated by ATP to form Pro-AMP and then transferred to the acceptor end of tRNA(Pro). This is Proline--tRNA ligase from Neorickettsia sennetsu (strain ATCC VR-367 / Miyayama) (Ehrlichia sennetsu).